Here is a 149-residue protein sequence, read N- to C-terminus: UPF0260 protein PSPPH_1551 (149 aa).

It belongs to the UPF0260 family.

The sequence is that of UPF0260 protein PSPPH_1551 from Pseudomonas savastanoi pv. phaseolicola (strain 1448A / Race 6) (Pseudomonas syringae pv. phaseolicola (strain 1448A / Race 6)).